Consider the following 330-residue polypeptide: MGTFTLHQGQTNLIKSFFRNYYLNAELELPKDMELREFALQPFGSDTYVRHLSFSSSEELRDYLVNRNLPLHLFYSSARYQLPSARNMEEKAWMGSDLLFDIDADHLCKLRSIRFCPVCGNAVVSEKCERDNVETLEYVEMTSECIKRGLEQTRNLVEILEDDFGLKPKVYFSGNRGFHVQVDCYGNCALLDSDERKEIAEYVMGIGVPGYPGGSENAPGWVGRKNRGINGVTIDEQVTIDVKRLIRIPNSLHGKSGLIVKRVPNLDDFEFNETLSPFTGYTIFLPYITIETEVLGSIIKLNRGIPIKIKSSIGIYLHLRNLGEVKAYVR.

Catalysis depends on residues D101 and D103. 4 residues coordinate Zn(2+): C116, C119, C128, and D131. Residue D235 is part of the active site.

This sequence belongs to the eukaryotic-type primase small subunit family. In terms of assembly, heterodimer of a small subunit (PriS) and a large subunit (PriL). It depends on Mg(2+) as a cofactor. Requires Mn(2+) as cofactor.

Its function is as follows. Catalytic subunit of DNA primase, an RNA polymerase that catalyzes the synthesis of short RNA molecules used as primers for DNA polymerase during DNA replication. The small subunit contains the primase catalytic core and has DNA synthesis activity on its own. Binding to the large subunit stabilizes and modulates the activity, increasing the rate of DNA synthesis while decreasing the length of the DNA fragments, and conferring RNA synthesis capability. The DNA polymerase activity may enable DNA primase to also catalyze primer extension after primer synthesis. May also play a role in DNA repair. Possesses a template-independent 3'-terminal nucleotidyl transferase activity. The sequence is that of DNA primase small subunit PriS from Saccharolobus solfataricus (strain ATCC 35092 / DSM 1617 / JCM 11322 / P2) (Sulfolobus solfataricus).